Here is a 236-residue protein sequence, read N- to C-terminus: Probable transcriptional regulatory protein FP0835 (236 aa).

Belongs to the TACO1 family.

It localises to the cytoplasm. This chain is Probable transcriptional regulatory protein FP0835, found in Flavobacterium psychrophilum (strain ATCC 49511 / DSM 21280 / CIP 103535 / JIP02/86).